An 88-amino-acid polypeptide reads, in one-letter code: Small ribosomal subunit protein bS20 (88 aa).

Disordered regions lie at residues 1-25 (MPNI…KAVK) and 68-88 (HKNQ…SLAA).

It belongs to the bacterial ribosomal protein bS20 family.

Its function is as follows. Binds directly to 16S ribosomal RNA. This Cutibacterium acnes (strain DSM 16379 / KPA171202) (Propionibacterium acnes) protein is Small ribosomal subunit protein bS20.